The primary structure comprises 88 residues: uncharacterized protein (88 aa).

This is an uncharacterized protein from Sulfolobus islandicus filamentous virus (isolate Iceland/Hveragerdi) (SIFV).